A 349-amino-acid chain; its full sequence is Dihydroorotate dehydrogenase (quinone) (349 aa).

FMN is bound by residues 67-71 (AGLDK) and Thr91. Position 71 (Lys71) interacts with substrate. Residue 116–120 (NRLGF) coordinates substrate. Residues Asn147 and Asn180 each coordinate FMN. Asn180 serves as a coordination point for substrate. Ser183 serves as the catalytic Nucleophile. Substrate is bound at residue Asn185. The FMN site is built by Lys225 and Thr253. A substrate-binding site is contributed by 254–255 (NT). Residues Gly276, Gly305, and 326–327 (YT) contribute to the FMN site.

It belongs to the dihydroorotate dehydrogenase family. Type 2 subfamily. As to quaternary structure, monomer. FMN serves as cofactor.

The protein localises to the cell membrane. It carries out the reaction (S)-dihydroorotate + a quinone = orotate + a quinol. Its pathway is pyrimidine metabolism; UMP biosynthesis via de novo pathway; orotate from (S)-dihydroorotate (quinone route): step 1/1. Its function is as follows. Catalyzes the conversion of dihydroorotate to orotate with quinone as electron acceptor. This is Dihydroorotate dehydrogenase (quinone) from Bordetella avium (strain 197N).